The following is a 213-amino-acid chain: MYQDKILVRQLGLQPYEPISLAMHEFTDTRDESTLDEIWLVEHYPVFTQGQAGKAEHILMPGDIPVIQSDRGGQVTYHGPGQQVMYVLLNLKRRKLGVRELVTLLEQTVVNTLAELGIEAHPRADAPGVYVGEKKICSLGLRIRRGCSFHGLALNVNMDLSPFLRINPCGYAGMEMAKISQWKPEATTNNIAPRLLENILALLNNPDFEYITA.

In terms of domain architecture, BPL/LPL catalytic spans 32-207 (ESTLDEIWLV…NILALLNNPD (176 aa)). Substrate-binding positions include 71-78 (RGGQVTYH), 138-140 (SLG), and 151-153 (GLA). The active-site Acyl-thioester intermediate is Cys-169.

It belongs to the LipB family.

It localises to the cytoplasm. The enzyme catalyses octanoyl-[ACP] + L-lysyl-[protein] = N(6)-octanoyl-L-lysyl-[protein] + holo-[ACP] + H(+). It participates in protein modification; protein lipoylation via endogenous pathway; protein N(6)-(lipoyl)lysine from octanoyl-[acyl-carrier-protein]: step 1/2. Its function is as follows. Catalyzes the transfer of endogenously produced octanoic acid from octanoyl-acyl-carrier-protein onto the lipoyl domains of lipoate-dependent enzymes. Lipoyl-ACP can also act as a substrate although octanoyl-ACP is likely to be the physiological substrate. The chain is Octanoyltransferase from Escherichia coli (strain SMS-3-5 / SECEC).